Consider the following 342-residue polypeptide: D-erythrose-4-phosphate dehydrogenase (342 aa).

An NAD(+)-binding site is contributed by 11-12 (RI). Residues 153–155 (SCT), R199, 212–213 (TK), and R235 each bind substrate. The active-site Nucleophile is the C154. Residue N317 participates in NAD(+) binding.

It belongs to the glyceraldehyde-3-phosphate dehydrogenase family. Epd subfamily. Homotetramer.

The protein localises to the cytoplasm. The enzyme catalyses D-erythrose 4-phosphate + NAD(+) + H2O = 4-phospho-D-erythronate + NADH + 2 H(+). Its pathway is cofactor biosynthesis; pyridoxine 5'-phosphate biosynthesis; pyridoxine 5'-phosphate from D-erythrose 4-phosphate: step 1/5. Its function is as follows. Catalyzes the NAD-dependent conversion of D-erythrose 4-phosphate to 4-phosphoerythronate. This Shewanella denitrificans (strain OS217 / ATCC BAA-1090 / DSM 15013) protein is D-erythrose-4-phosphate dehydrogenase.